The sequence spans 655 residues: Kelch-like protein 13 (655 aa).

One can recognise a BTB domain in the interval Cys-92–Met-161. In terms of domain architecture, BACK spans Cys-196–Gln-297. Kelch repeat units follow at residues His-341–Asn-389, Phe-390–Gly-441, Tyr-442–Gly-488, Met-490–Glu-535, Leu-537–Asn-587, and Lys-588–Val-636.

In terms of assembly, component of the BCR(KLHL9-KLHL13) E3 ubiquitin ligase complex, at least composed of CUL3, KLHL9, KLHL13 and RBX1. Interacts with AURKB.

It participates in protein modification; protein ubiquitination. Its function is as follows. Substrate-specific adapter of a BCR (BTB-CUL3-RBX1) E3 ubiquitin-protein ligase complex required for mitotic progression and cytokinesis. The BCR(KLHL9-KLHL13) E3 ubiquitin ligase complex mediates the ubiquitination of AURKB and controls the dynamic behavior of AURKB on mitotic chromosomes and thereby coordinates faithful mitotic progression and completion of cytokinesis. The chain is Kelch-like protein 13 (KLHL13) from Homo sapiens (Human).